The primary structure comprises 599 residues: Elongation factor 4 (599 aa).

The region spanning 5 to 187 (SHIRNFSIIA…RLVQTIPAPT (183 aa)) is the tr-type G domain. GTP-binding positions include 17–22 (DHGKST) and 134–137 (NKMD).

The protein belongs to the TRAFAC class translation factor GTPase superfamily. Classic translation factor GTPase family. LepA subfamily.

It localises to the cell inner membrane. The catalysed reaction is GTP + H2O = GDP + phosphate + H(+). Its function is as follows. Required for accurate and efficient protein synthesis under certain stress conditions. May act as a fidelity factor of the translation reaction, by catalyzing a one-codon backward translocation of tRNAs on improperly translocated ribosomes. Back-translocation proceeds from a post-translocation (POST) complex to a pre-translocation (PRE) complex, thus giving elongation factor G a second chance to translocate the tRNAs correctly. Binds to ribosomes in a GTP-dependent manner. The protein is Elongation factor 4 of Ectopseudomonas mendocina (strain ymp) (Pseudomonas mendocina).